The sequence spans 109 residues: Parvalbumin beta (109 aa).

An N-acetylalanine modification is found at Ala2. EF-hand domains follow at residues 39-74 (KSAD…FKAG) and 78-109 (LSDA…MIKG). Residues Asp52, Asp54, Ser56, Tyr58, Glu60, Glu63, Asp91, Asp93, Asp95, Lys97, and Glu102 each coordinate Ca(2+).

It belongs to the parvalbumin family. The N-terminus is blocked.

In muscle, parvalbumin is thought to be involved in relaxation after contraction. It binds two calcium ions. This chain is Parvalbumin beta, found in Scomber scombrus (Atlantic mackerel).